Reading from the N-terminus, the 395-residue chain is Vacuolar protease A (395 aa).

The N-terminal stretch at 1 to 18 is a signal peptide; sequence MKGSLLLAGATLLGCTSA. The propeptide at 19-72 is activation peptide; sequence KLHSLKLKKVSLKEQLEHADIDVQIKSLGQKYMGIRPGQHEQQMFKEQTPIEAE. Positions 87–392 constitute a Peptidase A1 domain; it reads YFSEISIGTP…DLGKGTVGLA (306 aa). Asp-105 is a catalytic residue. Cys-118 and Cys-123 form a disulfide bridge. A glycan (N-linked (GlcNAc...) asparagine) is linked at Asn-140. Residue Asp-289 is part of the active site. Cys-318 and Cys-351 are oxidised to a cystine. A glycan (N-linked (GlcNAc...) asparagine) is linked at Asn-335.

Belongs to the peptidase A1 family.

The protein resides in the vacuole lumen. It is found in the secreted. The catalysed reaction is Hydrolysis of proteins with broad specificity for peptide bonds. Cleaves -Leu-Leu-|-Val-Tyr- bond in a synthetic substrate. Does not act on esters of Tyr or Arg.. In terms of biological role, vacuolar aspartic endopeptidase which is probably also secreted and contributes to virulence. This chain is Vacuolar protease A (PEP2), found in Arthroderma otae (strain ATCC MYA-4605 / CBS 113480) (Microsporum canis).